Here is a 620-residue protein sequence, read N- to C-terminus: Dihydroxy-acid dehydratase (620 aa).

A Mg(2+)-binding site is contributed by Asp-82. Cys-123 provides a ligand contact to [2Fe-2S] cluster. Residues Asp-124 and Lys-125 each coordinate Mg(2+). Lys-125 bears the N6-carboxylysine mark. [2Fe-2S] cluster is bound at residue Cys-197. Residue Glu-493 participates in Mg(2+) binding. Catalysis depends on Ser-519, which acts as the Proton acceptor.

The protein belongs to the IlvD/Edd family. In terms of assembly, homodimer. It depends on [2Fe-2S] cluster as a cofactor. Mg(2+) serves as cofactor.

The catalysed reaction is (2R)-2,3-dihydroxy-3-methylbutanoate = 3-methyl-2-oxobutanoate + H2O. It carries out the reaction (2R,3R)-2,3-dihydroxy-3-methylpentanoate = (S)-3-methyl-2-oxopentanoate + H2O. It functions in the pathway amino-acid biosynthesis; L-isoleucine biosynthesis; L-isoleucine from 2-oxobutanoate: step 3/4. It participates in amino-acid biosynthesis; L-valine biosynthesis; L-valine from pyruvate: step 3/4. Its function is as follows. Functions in the biosynthesis of branched-chain amino acids. Catalyzes the dehydration of (2R,3R)-2,3-dihydroxy-3-methylpentanoate (2,3-dihydroxy-3-methylvalerate) into 2-oxo-3-methylpentanoate (2-oxo-3-methylvalerate) and of (2R)-2,3-dihydroxy-3-methylbutanoate (2,3-dihydroxyisovalerate) into 2-oxo-3-methylbutanoate (2-oxoisovalerate), the penultimate precursor to L-isoleucine and L-valine, respectively. This is Dihydroxy-acid dehydratase from Bifidobacterium longum (strain NCC 2705).